Consider the following 561-residue polypeptide: MPESKYRQQTIRAPRGATLTAKSWLTEAPLRMLMNNLDPDVAENPHELVVYGGIGRAARNWECYDAIVDALTRLEADETLLIQSGKPVGVFKTHDNAPRVLIANSNLVPHWATWEHFNELDAKGLAMYGQMTAGSWIYIGSQGIVQGTYETFVEAGRQHYNGTLAGRWVLTAGLGGMGGAQPLAATLAGACSLTIECQQSRIDFRLRTRYVDEQAATLDDALARIAHYTRAGKAVSVALCANAADILPELVNRGVRPDLVTDQTSAHDPLHGYLPTGWRWEEYQEKALSDPQGTMQAAKRSMAAHVQAMLAFSKMGVPTFDYGNNIRQMAKEMGVENAFDFPGFVPAYIRPLFCRGIGPFRWVALSGDPQDIYKTDAKVKEIVAEDKHLHHWLDMARERIHFQGLPARICWVGLEWRQKLGLAFNEMVRCGEVSAPIVIGRDHLDSGSVASPNRETEAMRDGSDAVSDWPLLNALLNTASGATWVSLHHGGGVGMGFSQHAGMVIVCDGTDEAAARIRRVLHNDPATGVMRHADAGYDLAVECAVEQGLHLPMVAATQRKR.

NAD(+)-binding positions include 52–53 (GG), glutamine 130, 176–178 (GMG), glutamate 196, arginine 201, 242–243 (NA), 263–267 (QTSAH), 273–274 (YL), and tyrosine 322. Cysteine 410 is a catalytic residue. Position 492 (glycine 492) interacts with NAD(+).

It belongs to the urocanase family. The cofactor is NAD(+).

It localises to the cytoplasm. It carries out the reaction 4-imidazolone-5-propanoate = trans-urocanate + H2O. The protein operates within amino-acid degradation; L-histidine degradation into L-glutamate; N-formimidoyl-L-glutamate from L-histidine: step 2/3. Catalyzes the conversion of urocanate to 4-imidazolone-5-propionate. In Salmonella arizonae (strain ATCC BAA-731 / CDC346-86 / RSK2980), this protein is Urocanate hydratase.